The primary structure comprises 376 residues: MELHLALRASPLPAADPGRRPPPPRGNFATNCTAAINSTHISQEKFRSLDSWVEHNMLTFLKPVEKCWQPQDFLPDPSHLSAEELGDAVREIHERAAEIPDEVWVCMVGNMVTEEALPTYQSLISSVLGGTVAGSTPWDRWIRGWSAEENRHGDLLNKYLYLTGRLDMRQVEKTIQYLIGSGMDVGVGNSILCGFIYTCFQEKATFIPHGNTARLAKHHGDTTLAKICGLVAADEKRHAAAYTNLMRKLFEVDPNESMLAFAHVMQARVTMPASRMFDGRDPHLFTHFSDVSQKIGVYTVGDYSEMLDFFLKEWDISAIVDGLSPEGRRVQEYVCGLPEVMRKLAERADDRRKKLVNVGEPRYIPFSWIFNKQVRV.

Residues 1–33 constitute a chloroplast transit peptide; it reads MELHLALRASPLPAADPGRRPPPPRGNFATNCT. Fe cation is bound by residues Glu-114, Glu-149, His-152, Glu-202, Glu-235, and His-238.

Belongs to the fatty acid desaturase type 2 family. Homodimer. Fe(2+) is required as a cofactor. Preferentially expressed in the flower labellum.

It localises to the plastid. The protein resides in the chloroplast stroma. It carries out the reaction hexadecanoyl-[ACP] + 2 reduced [2Fe-2S]-[ferredoxin] + O2 + 2 H(+) = (4Z)-hexadecenoyl-[ACP] + 2 oxidized [2Fe-2S]-[ferredoxin] + 2 H2O. The catalysed reaction is octadecanoyl-[ACP] + 2 reduced [2Fe-2S]-[ferredoxin] + O2 + 2 H(+) = (9Z)-octadecenoyl-[ACP] + 2 oxidized [2Fe-2S]-[ferredoxin] + 2 H2O. Its pathway is lipid metabolism; fatty acid metabolism. Its function is as follows. Converts stearoyl-ACP to oleoyl-ACP by introduction of a cis double bond between carbons 9 and 10 of the acyl chain. Converts palmitoyl-ACP to (4Z)-hexadec-4-enoyl-ACP by introduction of a cis double bond between carbons 4 and 5 of the acyl chain. Catalyzes the desaturation of saturated fatty acid 18:0 and 16:0 to generate 18:1 (delta-9) and 16:1 (delta-4) intermediates, expected to give rise to 9-alkenes and 12-alkenes, respectively. This is Palmitoyl-[acyl-carrier-protein] 4-desaturase 2, chloroplastic (SAD2) from Ophrys arachnitiformis subsp. archipelagi (Orchid).